Reading from the N-terminus, the 352-residue chain is Minor capsid protein VP2 (352 aa).

Gly-2 carries N-myristoyl glycine; by host lipidation. Residues 273–308 are D1; sequence SGEFIEKTLAPGGANQRIAPQWMLPLLLGLYGTVTP. The helical transmembrane segment at 290-310 threads the bilayer; the sequence is IAPQWMLPLLLGLYGTVTPAL. Residues 312 to 352 form a disordered region; it reads AYEDAPSKKKRRMSRGSSQKAKGPRASSKTSYKRRRRSTRS. A DNA-binding region spans residues 313–352; the sequence is YEDAPSKKKRRMSRGSSQKAKGPRASSKTSYKRRRRSTRS. The short motif at 316 to 324 is the Nuclear localization signal element; it reads APSKKKRRM. Positions 342–352 are enriched in basic residues; the sequence is SYKRRRRSTRS.

Belongs to the polyomaviruses capsid protein VP2 family. In terms of assembly, forms homooligomers, and heterooligomers with VP3 in the endoplasmic reticulum membrane. Interacts (via D1 domain) with VP1. Interacts (via D1 domain) with VP1.

The protein resides in the virion. The protein localises to the host nucleus. It is found in the host endoplasmic reticulum. Its subcellular location is the host endoplasmic reticulum membrane. Functionally, structural protein that resides within the core of the capsid surrounded by 72 VP1 pentamers. Participates in host cell receptor binding together with VP1. Following virus endocytosis and trafficking to the endoplasmic reticulum, VP2 and VP3 form oligomers and integrate into the endoplasmic reticulum membrane. Heterooligomer VP2-VP3 may create a viroporin for transporting the viral genome across the endoplasmic reticulum membrane to the cytoplasm. Nuclear entry of the viral DNA involves the selective exposure and importin recognition of VP2 or VP3 nuclear localization signal (shared C-terminus). Plays a role in virion assembly within the nucleus in particular through a DNA-binding domain located in the C-terminal region. An N-terminal myristoylation suggests a scaffold function for virion assembly. Structural protein that resides within the core of the capsid surrounded by 72 VP1 pentamers. Following virus endocytosis and trafficking to the endoplasmic reticulum, VP2 and VP3 form oligomers and integrate into the endoplasmic reticulum membrane. Heterooligomer VP2-VP3 may create a viroporin for transporting the viral genome across the endoplasmic reticulum membrane to the cytoplasm. Nuclear entry of the viral DNA involves the selective exposure and importin recognition of VP2 or VP3 nuclear localization signal (shared C-terminus). Plays a role in virion assembly within the nucleus. May participate in host cell lysis when associated with VP4. In terms of biological role, viroporin inducing perforation of cellular membranes to trigger virus progeny release. Forms pores of 3 nm inner diameter. VP4 is expressed about 24 hours after the late structural proteins and is not incorporated into the mature virion. This chain is Minor capsid protein VP2, found in Simian virus 12 (strain wt100) (SV-12).